Here is a 94-residue protein sequence, read N- to C-terminus: Small ribosomal subunit protein bS6 (94 aa).

The protein belongs to the bacterial ribosomal protein bS6 family.

In terms of biological role, binds together with bS18 to 16S ribosomal RNA. This chain is Small ribosomal subunit protein bS6, found in Fusobacterium nucleatum subsp. nucleatum (strain ATCC 25586 / DSM 15643 / BCRC 10681 / CIP 101130 / JCM 8532 / KCTC 2640 / LMG 13131 / VPI 4355).